Here is an 892-residue protein sequence, read N- to C-terminus: Zinc finger protein 512B (892 aa).

Positions 1–82 (MTDPFCVGGR…KKGRPKAENQ (82 aa)) are disordered. Low complexity predominate over residues 8–19 (GGRRLPGSSKSG). Residues 105–129 (VKCPNSGCWLEFPSIYGLKYHYQRC) form a C2H2-type 1; atypical zinc finger. Residues 140-163 (FPCPFCEAAFTSKTQLEKHRIWNH) form a C2H2-type 2 zinc finger. 2 disordered regions span residues 323–473 (MVLL…RKKV) and 562–582 (EHSA…EERE). Residues 371 to 384 (SMGQSSAFQLSADT) show a composition bias toward polar residues. Positions 385 to 398 (SSGSLSPGSRPSGG) are enriched in low complexity. A Phosphoserine modification is found at S409. A compositionally biased stretch (basic residues) spans 418-428 (TKHRRKQKTPK). The NuRD interaction motif motif lies at 421–427 (RRKQKTP). Residues 540-563 (LKCQHCRKQFKSKAGLNYHTMAEH) form a C2H2-type 3 zinc finger. The segment at 594-618 (LRCPQEGCGAAFSSLMGYQYHQRRC) adopts a C2H2-type 4; atypical zinc-finger fold. The C2H2-type 5 zinc-finger motif lies at 630 to 653 (FPCTHCGKTYRSKAGHDYHVRSEH). Residues 649-682 (VRSEHTAPPPEEPTDKSPEAEDPLGVERTPSGRV) form a disordered region. S686 carries the phosphoserine modification. Residues 750–774 (VNCPNDCCEAIYSSVSGLKAHLASC) form a C2H2-type 6; atypical zinc finger. The segment at 784–807 (YRCLLCPKEFSSESGVKYHILKTH) adopts a C2H2-type 7 zinc-finger fold. The interval 812-892 (FRTSADPPPK…KVGVSKAPEK (81 aa)) is disordered. Positions 819–831 (PPKHRSQDSLVPK) are enriched in basic and acidic residues. Residues 832 to 849 (KEKKKNLAGGKKRGRKPK) are compositionally biased toward basic residues. Basic and acidic residues predominate over residues 850 to 876 (ERTPEEPVAKLPPRRDDWPPGCRDKGA).

This sequence belongs to the krueppel C2H2-type zinc-finger protein family. Interacts (via its NuRD interaction motif) with RBBP4 of the nucleosome remodeling and deacetylase (NuRD) complex; the interaction is direct and may play a role in repressing gene expression.

The protein resides in the nucleus. In terms of biological role, involved in transcriptional regulation by repressing gene expression. Associates with the nucleosome remodeling and histone deacetylase (NuRD) complex, which promotes transcriptional repression by histone deacetylation and nucleosome remodeling. This chain is Zinc finger protein 512B (ZNF512B), found in Homo sapiens (Human).